We begin with the raw amino-acid sequence, 124 residues long: Small ribosomal subunit protein bS6 (124 aa).

The interval 96–124 (ETGPSPMMKEVQREEAKKAAAAQPAEAQA) is disordered. Residues 114 to 124 (AAAAQPAEAQA) show a composition bias toward low complexity.

It belongs to the bacterial ribosomal protein bS6 family.

In terms of biological role, binds together with bS18 to 16S ribosomal RNA. This Burkholderia orbicola (strain AU 1054) protein is Small ribosomal subunit protein bS6.